The chain runs to 1632 residues: uncharacterized protein (1632 aa).

Positions 1 to 15 (MSNNKQTAAPAATSN) are enriched in polar residues. Positions 1–23 (MSNNKQTAAPAATSNEKAENGAE) are disordered. Over 1-63 (MSNNKQTAAP…TKDAFKGKYR (63 aa)) the chain is Cytoplasmic. Residues 64-86 (VFYGNGLHTSIMFGAGTAALDLM) form a helical membrane-spanning segment. At 87 to 1632 (TPGSFLPPFP…ESDGEEMSGE (1546 aa)) the chain is on the extracellular side. Asn149 and Asn274 each carry an N-linked (GlcNAc...) asparagine; by host glycan. A disordered region spans residues 516 to 538 (ELSSQLGDTDTKKEQKEKRSKQG). Residues Asn654, Asn719, and Asn797 are each glycosylated (N-linked (GlcNAc...) asparagine; by host). The disordered stretch occupies residues 838 to 890 (IKGTKKSDDGDSKTDGSGDMEDDFTSLAKMTNRKRKAGGKDGPSKKKKKDGAD). Composition is skewed to basic and acidic residues over residues 842-853 (KKSDDGDSKTDG) and 875-890 (GGKDGPSKKKKKDGAD). 6 N-linked (GlcNAc...) asparagine; by host glycosylation sites follow: Asn1012, Asn1031, Asn1261, Asn1339, Asn1511, and Asn1546. Residues 1603–1632 (PSAMDVDEDEDEDMDDESDDESDGEEMSGE) form a disordered region. Positions 1607–1632 (DVDEDEDEDMDDESDDESDGEEMSGE) are enriched in acidic residues.

Its subcellular location is the host membrane. This is an uncharacterized protein from Ostreid herpesvirus 1 (isolate France) (OsHV-1).